The chain runs to 306 residues: uncharacterized protein (306 aa).

8 helical membrane passes run 7–27, 30–50, 68–88, 95–115, 144–164, 194–214, 232–252, and 274–294; these read LESW…GYLA, VGII…FMAL, LFIT…LFAL, ADHV…TLFI, AIGV…LMSF, IGAI…VLSV, IAIM…GLIF, and TIPF…NVAP.

The protein resides in the cell membrane. This is an uncharacterized protein from Mycoplasma genitalium (strain ATCC 33530 / DSM 19775 / NCTC 10195 / G37) (Mycoplasmoides genitalium).